A 517-amino-acid polypeptide reads, in one-letter code: MSSLTPPNSNQMSALNNHFFFGLTTPKLEEFAPALEATLAYAVTDERVYERTAPEPPDRSWTTPTAAENPLSAWYVTTSISYTDGGPLAGRTVAIKDNVTVAGVPMMNGSRVVEGFTPRYDATVLRRLLDAGATKAGKAVCEDLCFSGSSVTSHPQPVRNPWDESHGYKAGGSSSGSEALVASGHVDCAVGGDGGGSIRIPLACCGIVGCKPTHGLKPYTFPIERTIDHLGPMTRTVGDAAMMLTVLAGTDGLDPRQADHRIEPVDYLAALAEPAGLRVVVVTEGFDTPVQDAAVDDAVRAAILVLRSGCLTVEIVSIPIHLDAFAVWNVIATEGAAYQMLDGNYYGMNTGGFYDPELIIHFSRRRLEHGHQLSKTVKLVGMGGRYTSETGGGKYAAAARQLVREVRAAYDLALARYDVLVMPTLPYTATKIPITDIPLADYLDTALSMIINTAPFDVTGHPALCPVAGAVHGLPVGMMIIGKAHDDDATVLRVAAFEHAVGNYPVPPEAASTLATL.

Active-site charge relay system residues include K96 and S173. S197 functions as the Acyl-ester intermediate in the catalytic mechanism.

The protein belongs to the amidase family. As to quaternary structure, homooctamer.

It carries out the reaction a monocarboxylic acid amide + H2O = a monocarboxylate + NH4(+). The protein is Enantioselective amidase (amdA) of Rhodococcus rhodochrous.